Here is a 425-residue protein sequence, read N- to C-terminus: Glutamate-1-semialdehyde 2,1-aminomutase (425 aa).

The residue at position 266 (Lys266) is an N6-(pyridoxal phosphate)lysine.

The protein belongs to the class-III pyridoxal-phosphate-dependent aminotransferase family. HemL subfamily. In terms of assembly, homodimer. Pyridoxal 5'-phosphate serves as cofactor.

It is found in the cytoplasm. The enzyme catalyses (S)-4-amino-5-oxopentanoate = 5-aminolevulinate. Its pathway is porphyrin-containing compound metabolism; protoporphyrin-IX biosynthesis; 5-aminolevulinate from L-glutamyl-tRNA(Glu): step 2/2. The chain is Glutamate-1-semialdehyde 2,1-aminomutase from Nitratidesulfovibrio vulgaris (strain DSM 19637 / Miyazaki F) (Desulfovibrio vulgaris).